Consider the following 671-residue polypeptide: Transcriptional regulator Kaiso (671 aa).

Residues 1–103 are interaction with NCOR1; that stretch reads MESRKLISAT…RADLLDELIK (103 aa). Positions 1-136 are self-association; sequence MESRKLISAT…SGTEQDGTAE (136 aa). In terms of domain architecture, BTB spans 32 to 94; it reads CDVTVIVEDR…IYSSKVVRVR (63 aa). The span at 127–144 shows a compositional bias: polar residues; that stretch reads SGTEQDGTAETLPSSSSD. The interval 127 to 161 is disordered; that stretch reads SGTEQDGTAETLPSSSSDKSLDMEKSKDEAQDNGA. A compositionally biased stretch (basic and acidic residues) spans 145 to 156; sequence KSLDMEKSKDEA. Glycyl lysine isopeptide (Lys-Gly) (interchain with G-Cter in SUMO2) cross-links involve residues K151 and K153. T251 is modified (phosphothreonine). Residues 298–571 form an interaction with CBFA2T3 region; sequence LPNHMSSSVN…FMSSHIKSVH (274 aa). The tract at residues 332–365 is disordered; sequence IIDDDDDIISSSPDSAVSNTSLVPQADNSKSTTL. The span at 347–365 shows a compositional bias: polar residues; the sequence is AVSNTSLVPQADNSKSTTL. Glycyl lysine isopeptide (Lys-Gly) (interchain with G-Cter in SUMO2) cross-links involve residues K388, K405, K412, and K447. The segment covering 451 to 461 has biased composition (basic and acidic residues); that stretch reads DGGEAKLDNEL. The segment at 451 to 474 is disordered; that stretch reads DGGEAKLDNELPKTSGSEPPNKRM. Residues 452–671 form an interaction with CTNND1 region; sequence GGEAKLDNEL…EFEFIIPESY (220 aa). Residues K463, K472, and K477 each participate in a glycyl lysine isopeptide (Lys-Gly) (interchain with G-Cter in SUMO2) cross-link. Positions 469-478 match the Nuclear localization signal motif; sequence PPNKRMKVKH. 3 consecutive C2H2-type zinc fingers follow at residues 492-514, 520-542, and 548-571; these read YICI…FNIH, YQCR…EIHH, and YQCL…KSVH. A required for DNA-binding region spans residues 512–637; sequence NIHSWEKKYQ…TSTPPQNKST (126 aa). Glycyl lysine isopeptide (Lys-Gly) (interchain with G-Cter in SUMO2) cross-links involve residues K537, K568, K580, K609, and K616.

In terms of assembly, interacts with NCOR1. Self-associates. Interacts with CTNND1, and this interaction inhibits binding to both methylated and non-methylated DNA. Interacts with CTNND2. Interacts with KPNA2/RCH1, which may mediate nuclear import of this protein. Interacts with CBFA2T3. Expressed in brain, heart, kidney, liver, lung, neuromuscular junctions, skeletal muscle, spleen and testis.

The protein localises to the nucleus. Transcriptional regulator with bimodal DNA-binding specificity. Binds to methylated CpG dinucleotides in the consensus sequence 5'-CGCG-3' and also binds to the non-methylated consensus sequence 5'-CTGCNA-3' also known as the consensus kaiso binding site (KBS). May recruit the N-CoR repressor complex to promote histone deacetylation and the formation of repressive chromatin structures in target gene promoters. Contributes to the repression of target genes of the Wnt signaling pathway. May also activate transcription of a subset of target genes by the recruitment of CTNND2. Represses expression of MMP7 in conjunction with transcriptional corepressors CBFA2T3, CBFA2T2 and RUNX1T1. In Mus musculus (Mouse), this protein is Transcriptional regulator Kaiso (Zbtb33).